Here is a 131-residue protein sequence, read N- to C-terminus: Large ribosomal subunit protein bL17 (131 aa).

The protein belongs to the bacterial ribosomal protein bL17 family. In terms of assembly, part of the 50S ribosomal subunit. Contacts protein L32.

The protein is Large ribosomal subunit protein bL17 of Polynucleobacter necessarius subsp. necessarius (strain STIR1).